The following is a 549-amino-acid chain: Beta-mannosyltransferase 3 (549 aa).

Residues 1-37 (MFESDLSFYSALLILCCPISIVFFKKFPIKGYTGANK) lie on the Cytoplasmic side of the membrane. Residues 38-58 (VSLFLQCLIAILNLNILYSFI) form a helical membrane-spanning segment. The Extracellular segment spans residues 59-549 (NSLTITLGHD…DTMGWDKLSR (491 aa)).

It belongs to the BMT family.

It localises to the membrane. In terms of biological role, beta-mannosyltransferase involved in cell wall biosynthesis. Required for addition of the second beta-mannose residue to acid-stable fraction of cell wall phosphopeptidomannan, and in elongation of beta-mannose chains on the phosphopeptidomannan acid-labile fraction. The sequence is that of Beta-mannosyltransferase 3 (BMT3) from Candida albicans (strain SC5314 / ATCC MYA-2876) (Yeast).